A 138-amino-acid chain; its full sequence is Trypsin inhibitor DE5 alpha chain (138 aa).

A disulfide bridge links cysteine 40 with cysteine 86.

It belongs to the protease inhibitor I3 (leguminous Kunitz-type inhibitor) family. In terms of assembly, heterodimer of an alpha and a beta chain linked by a disulfide bond.

Its function is as follows. Inhibition of trypsin. In Adenanthera pavonina (Sandal bead tree), this protein is Trypsin inhibitor DE5 alpha chain.